Here is a 583-residue protein sequence, read N- to C-terminus: 2-succinyl-5-enolpyruvyl-6-hydroxy-3-cyclohexene-1-carboxylate synthase (583 aa).

The protein belongs to the TPP enzyme family. MenD subfamily. In terms of assembly, homodimer. Mg(2+) serves as cofactor. It depends on Mn(2+) as a cofactor. The cofactor is thiamine diphosphate.

It carries out the reaction isochorismate + 2-oxoglutarate + H(+) = 5-enolpyruvoyl-6-hydroxy-2-succinyl-cyclohex-3-ene-1-carboxylate + CO2. Its pathway is quinol/quinone metabolism; 1,4-dihydroxy-2-naphthoate biosynthesis; 1,4-dihydroxy-2-naphthoate from chorismate: step 2/7. It functions in the pathway cofactor biosynthesis; phylloquinone biosynthesis. In terms of biological role, catalyzes the thiamine diphosphate-dependent decarboxylation of 2-oxoglutarate and the subsequent addition of the resulting succinic semialdehyde-thiamine pyrophosphate anion to isochorismate to yield 2-succinyl-5-enolpyruvyl-6-hydroxy-3-cyclohexene-1-carboxylate (SEPHCHC). The chain is 2-succinyl-5-enolpyruvyl-6-hydroxy-3-cyclohexene-1-carboxylate synthase from Trichormus variabilis (strain ATCC 29413 / PCC 7937) (Anabaena variabilis).